The sequence spans 1588 residues: RB1-inducible coiled-coil protein 1 (1588 aa).

Residues Ser-222, Ser-229, and Ser-237 each carry the phosphoserine modification. Phosphothreonine is present on Thr-238. 4 positions are modified to phosphoserine: Ser-243, Ser-253, Ser-257, and Ser-261. Positions 565 to 568 (KPRK) match the Nuclear localization signal motif. A phosphoserine mark is found at Ser-623, Ser-646, Ser-649, Ser-652, Ser-733, Ser-1087, Ser-1366, and Ser-1478. The interval 638–674 (QKVSTSQASPQSAASPRIESTTGITTTTSPKTPPPLT) is disordered. The segment covering 643 to 667 (SQASPQSAASPRIESTTGITTTTSP) has biased composition (low complexity). The FFAT motif lies at 730–736 (DFMSAVN). Coiled coils occupy residues 858-1393 (LKEK…TSSF) and 1440-1479 (SVQENMLSEEKQRIMLLERTLQLKEEENKRLNQRLMSQSL).

In terms of assembly, part of a complex containing ATG13/KIAA0652, ULK1 and RB1CC1. This complex associates with ATG101. Interacts with PTK2/FAK1 and PTK2B/PYK2. Interacts with GABARAP and GABARAPL1. Interacts with ATG16L1; the interaction is required for ULK1 complex-dependent autophagy. Interacts with RNF111, SKI and SMAD7. Interacts with COP1 in the cytoplasm of proliferating cells in response to UV stimulation. Interacts with TP53. Interacts with C9orf72. Interacts with WDR45B. Interacts with ATG13; this interaction is increased in the absence of TMEM39A. Interacts with WIPI2. Interacts with TAX1BP1. Interacts (via phosphorylated FFAT motif) with MOSPD2. In terms of processing, phosphorylation at Ser-733 of the FFAT motif activates interaction with MOSPD2. In terms of tissue distribution, expressed abundantly in heart and testis, and moderately in kidney, liver and skeletal muscles. Very low expression levels in lung and spleen. Colocalizes with RB1 in various tissues.

Its subcellular location is the nucleus. It localises to the cytoplasm. The protein localises to the cytosol. The protein resides in the preautophagosomal structure. It is found in the lysosome. Its function is as follows. Involved in autophagy. Regulates early events but also late events of autophagosome formation through direct interaction with Atg16L1. Required for the formation of the autophagosome-like double-membrane structure that surrounds the Salmonella-containing vacuole (SCV) during S.typhimurium infection and subsequent xenophagy. Involved in repair of DNA damage caused by ionizing radiation, which subsequently improves cell survival by decreasing apoptosis. Inhibits PTK2/FAK1 and PTK2B/PYK2 kinase activity, affecting their downstream signaling pathways. Plays a role as a modulator of TGF-beta-signaling by restricting substrate specificity of RNF111. Functions as a DNA-binding transcription factor. Is a potent regulator of the RB1 pathway through induction of RB1 expression. Plays a crucial role in muscular differentiation. Plays an indispensable role in fetal hematopoiesis and in the regulation of neuronal homeostasis. This Mus musculus (Mouse) protein is RB1-inducible coiled-coil protein 1.